The primary structure comprises 630 residues: MDLTQIQNPSFLKEMSISELEGLSEDIRKFLIEELSQTGGHIAPNLGVVELTIALHKLFDSPKDKFLWDVGHQSYVHKILTGRAKEFGTLRQYQGLCGFPKRCESEHDVWETGHSSTSLSAAMGMALARDLKKTKEYVIPIIGDGALTGGMALEALNHIGHEKTDMIVILNDNEMSIAPNVGALHNVLGRLRTAGKYHWVKDELEYILKKIPAVGGKVAATAEKIKDSLKYLLVSGVFFEELGFTYLGPVDGHDYEKLFETLQYAKKTKGPVLVHVITKKGKGYKPAESDVIGTWHGTGPYKIESGDFVKPKEVAPAWSAVVSETVLKLARTDERIVAITPAMPVGSKLEKFQKEFPDRMIDVGIAEQHATTMAAGMATQGMKPFLAIYSTFLQRAYDQVVHDICRQNLNVFIGIDRSGLVGADGETHQGVFDISFLRHLPNMVLMMPKDENEGQHLVYTAMQYEDGPIALRYARGNGLGVHMDEELKAIPIGSWETLKEGTQAAILTFGTTIPMAMEAAERLEKAGVSVKVVNARFIKPMDEAYLHDLLGKNIPILTIEEACLIGGFGTGVVEFASENGYHSALVERMGIPDRFIEHGSVTKLLEEIGLTTDAVVDRIHTMIPSKQKRA.

Thiamine diphosphate-binding positions include His-72 and 113–115 (GHS). Position 144 (Asp-144) interacts with Mg(2+). Residues 145 to 146 (GA), Asn-173, Tyr-284, and Glu-367 contribute to the thiamine diphosphate site. Asn-173 serves as a coordination point for Mg(2+).

Belongs to the transketolase family. DXPS subfamily. In terms of assembly, homodimer. Requires Mg(2+) as cofactor. The cofactor is thiamine diphosphate.

The enzyme catalyses D-glyceraldehyde 3-phosphate + pyruvate + H(+) = 1-deoxy-D-xylulose 5-phosphate + CO2. Its pathway is metabolic intermediate biosynthesis; 1-deoxy-D-xylulose 5-phosphate biosynthesis; 1-deoxy-D-xylulose 5-phosphate from D-glyceraldehyde 3-phosphate and pyruvate: step 1/1. Catalyzes the acyloin condensation reaction between C atoms 2 and 3 of pyruvate and glyceraldehyde 3-phosphate to yield 1-deoxy-D-xylulose-5-phosphate (DXP). The sequence is that of 1-deoxy-D-xylulose-5-phosphate synthase from Bacillus cereus (strain AH187).